A 937-amino-acid chain; its full sequence is MGSLNIQHNGYDADVEKIREEEYPMLKDSIYLDHAGTTPYPKSLMDRFAQEMTTNLFGNPHSASASSQLSTQRIQDIRLRALQFFNADPADFDLVFVANATAGIKLVVEAMRCLPTGFDYVYHQSSHTSLVGVREEARSSVCLDTRQVEDWLSGSCPFDDNEDEERPILFAYPAQSNMDGRRFPLSWSSQICRQSLSPTNKRKTYTLLDAAALVSSSPLDLSNAETAPDFVVLSFYKIFGFPDLGALIVRKEVQDVFLSRRYFGGGTVDMVVCLKEQWHAPKDGFLHERLEDGTLPIHSIIALDVAMDVHAKLFGSMERVAGHTGFLARRLYQGLKGLRHANDELVCAIYSPDPETEESGPLVAFNIRNAQGIWISLAEVEKLATLKGIHIRTGGVCNPGGIASALGLEPWEMKQNFSSGFRCGTDNDTMGGKPTGIIRVSLGAMSTIADVDRFVQFVKEFYCEDTPPILPPPETKLDPSLRNTPELFIKSIVVYPIKSCAGFHVPPGIDWEVRPEGLVWDREWCLVHRGSGQALSQKRYPRMALLRPNLDFTKGELQVTFAGDISSSPGLPSSISVPLSKNPKMYAPKKSGMSSRVCGEEITPQTYASAQINDFFSTVLGVPCVLARFPPGGQGKGMTRHAKAHLQRHQHQQPHPAVSVSTRLTKPAMMPGAFPSPKAVETPPSPPDSDTERSATPTQEAQGPKPRRILLSNESPILAITSTSVDALNQSIALLNPSVSQPISEAVFRANLVLSPSPSTPSASPSNPLTPSPSPSTTSKPTPKPKQKPKQKLNPYEEDTWSSLTIFNSSSFSSSSSSCSTPSSSGFQTTTKFQMLGSCRRCHMVCIDQTTGSKTAGGEPFVTLSKTRRFEGKVFFGVHMGLQAEDEEDGHAEDIEKEGTGMGMGTGTGTGTGTRSMGGNGSVVKVRVGDVVRPSYL.

An N6-(pyridoxal phosphate)lysine modification is found at K237. C397 is a catalytic residue. 3 disordered regions span residues 633 to 710, 756 to 795, and 897 to 921; these read GQGK…RRIL, PSPS…KLNP, and KEGT…GGNG. The segment covering 638–652 has biased composition (basic residues); the sequence is MTRHAKAHLQRHQHQ. The region spanning 682-935 is the MOSC domain; it reads TPPSPPDSDT…VRVGDVVRPS (254 aa). Positions 756–767 are enriched in low complexity; sequence PSPSTPSASPSN. Gly residues predominate over residues 900–921; the sequence is TGMGMGTGTGTGTGTRSMGGNG.

Belongs to the class-V pyridoxal-phosphate-dependent aminotransferase family. MOCOS subfamily. Pyridoxal 5'-phosphate serves as cofactor.

The enzyme catalyses Mo-molybdopterin + L-cysteine + AH2 = thio-Mo-molybdopterin + L-alanine + A + H2O. The protein operates within cofactor biosynthesis; molybdopterin biosynthesis. Functionally, sulfurates the molybdenum cofactor. Sulfation of molybdenum is essential for xanthine dehydrogenase (XDH) and aldehyde oxidase (ADO) enzymes in which molybdenum cofactor is liganded by 1 oxygen and 1 sulfur atom in active form. The sequence is that of Molybdenum cofactor sulfurase (nit-13) from Neurospora crassa (strain ATCC 24698 / 74-OR23-1A / CBS 708.71 / DSM 1257 / FGSC 987).